The chain runs to 349 residues: Probable esterase Cgl0839 (349 aa).

An AB hydrolase-1 domain is found at 60–329 (GTHQTWFQQY…EDIAGHLGLF (270 aa)). Serine 142 acts as the Nucleophile in catalysis. Active-site residues include aspartate 296 and histidine 325.

The protein belongs to the AB hydrolase superfamily. Acetyl esterase family. In terms of assembly, homodimer.

Its function is as follows. Esterase that catalyzes the hydrolysis of 4-nitrophenyl acetate in vitro. This Corynebacterium glutamicum (strain ATCC 13032 / DSM 20300 / JCM 1318 / BCRC 11384 / CCUG 27702 / LMG 3730 / NBRC 12168 / NCIMB 10025 / NRRL B-2784 / 534) protein is Probable esterase Cgl0839.